A 295-amino-acid polypeptide reads, in one-letter code: ATP synthase gamma chain (295 aa).

Belongs to the ATPase gamma chain family. F-type ATPases have 2 components, CF(1) - the catalytic core - and CF(0) - the membrane proton channel. CF(1) has five subunits: alpha(3), beta(3), gamma(1), delta(1), epsilon(1). CF(0) has three main subunits: a, b and c.

The protein resides in the cell membrane. Functionally, produces ATP from ADP in the presence of a proton gradient across the membrane. The gamma chain is believed to be important in regulating ATPase activity and the flow of protons through the CF(0) complex. The polypeptide is ATP synthase gamma chain (Herpetosiphon aurantiacus (strain ATCC 23779 / DSM 785 / 114-95)).